We begin with the raw amino-acid sequence, 535 residues long: 4-hydroxy-3-methylbut-2-enyl diphosphate reductase, apicoplast (535 aa).

Cys231 contacts [4Fe-4S] cluster. Residues His260 and His293 each coordinate (2E)-4-hydroxy-3-methylbut-2-enyl diphosphate. Residues His260 and His293 each contribute to the dimethylallyl diphosphate site. His260 and His293 together coordinate isopentenyl diphosphate. Cys315 serves as a coordination point for [4Fe-4S] cluster. His343 contacts (2E)-4-hydroxy-3-methylbut-2-enyl diphosphate. Dimethylallyl diphosphate is bound at residue His343. His343 contributes to the isopentenyl diphosphate binding site. Glu345 (proton donor) is an active-site residue. (2E)-4-hydroxy-3-methylbut-2-enyl diphosphate is bound at residue Thr383. Cys413 is a [4Fe-4S] cluster binding site. (2E)-4-hydroxy-3-methylbut-2-enyl diphosphate-binding residues include Ser441, Ser442, Asn443, and Ser485. Residues Ser441, Ser442, Asn443, and Ser485 each contribute to the dimethylallyl diphosphate site. Positions 441, 442, 443, and 485 each coordinate isopentenyl diphosphate.

Belongs to the IspH family. Interacts with Fd/ferredoxin. The cofactor is [4Fe-4S] cluster.

The protein localises to the plastid. It is found in the apicoplast. The catalysed reaction is dimethylallyl diphosphate + 2 oxidized [2Fe-2S]-[ferredoxin] + H2O = (2E)-4-hydroxy-3-methylbut-2-enyl diphosphate + 2 reduced [2Fe-2S]-[ferredoxin] + 2 H(+). It carries out the reaction isopentenyl diphosphate + 2 oxidized [2Fe-2S]-[ferredoxin] + H2O = (2E)-4-hydroxy-3-methylbut-2-enyl diphosphate + 2 reduced [2Fe-2S]-[ferredoxin] + 2 H(+). Its pathway is isoprenoid biosynthesis; dimethylallyl diphosphate biosynthesis; dimethylallyl diphosphate from (2E)-4-hydroxy-3-methylbutenyl diphosphate: step 1/1. It participates in isoprenoid biosynthesis; isopentenyl diphosphate biosynthesis via DXP pathway; isopentenyl diphosphate from 1-deoxy-D-xylulose 5-phosphate: step 6/6. Catalyzes the conversion of 1-hydroxy-2-methyl-2-(E)-butenyl 4-diphosphate (HMBPP) into a mixture of isopentenyl diphosphate (IPP) and dimethylallyl diphosphate (DMAPP). Acts in the terminal step of the DOXP/MEP pathway for isoprenoid precursor biosynthesis. This is 4-hydroxy-3-methylbut-2-enyl diphosphate reductase, apicoplast from Plasmodium falciparum (isolate 3D7).